We begin with the raw amino-acid sequence, 143 residues long: Photosystem I reaction center subunit IV A, chloroplastic (143 aa).

The transit peptide at 1-44 (MAMTTASTVFVLPANVTSVAGASSSRSSVSFLPMRNAGSRLVVR) directs the protein to the chloroplast. Positions 43–85 (VRAAEDPAPASSSSKDSPAAAAAPDGATATKPKPPPIGPKRGS) are disordered. Low complexity predominate over residues 48-73 (DPAPASSSSKDSPAAAAAPDGATATK).

Belongs to the PsaE family. 2 isoforms may exist. With or without the N-terminal alanine.

The protein resides in the plastid. It localises to the chloroplast thylakoid membrane. Its function is as follows. Stabilizes the interaction between PsaC and the PSI core, assists the docking of the ferredoxin to PSI and interacts with ferredoxin-NADP oxidoreductase. In Arabidopsis thaliana (Mouse-ear cress), this protein is Photosystem I reaction center subunit IV A, chloroplastic (PSAE1).